Consider the following 511-residue polypeptide: Exodeoxyribonuclease 7 large subunit (511 aa).

The protein belongs to the XseA family. As to quaternary structure, heterooligomer composed of large and small subunits.

The protein localises to the cytoplasm. It catalyses the reaction Exonucleolytic cleavage in either 5'- to 3'- or 3'- to 5'-direction to yield nucleoside 5'-phosphates.. Functionally, bidirectionally degrades single-stranded DNA into large acid-insoluble oligonucleotides, which are then degraded further into small acid-soluble oligonucleotides. The protein is Exodeoxyribonuclease 7 large subunit of Brucella canis (strain ATCC 23365 / NCTC 10854 / RM-666).